A 540-amino-acid chain; its full sequence is MDSQRNILLIALALVSFLLFQQWQVAKNPAPQAVEQAQSSSTLPAPSFADELDPVPGQQQASAKTITVTTDVLTLSIDTVGGDVVHADLNKYSAELDSSDPFVLLKDTKGHQFIAQSGLVGPQGIDLSSTNRPHYKVSADSFTLADGQDELRVPMTFTANGIEYIKTYVFKRGSYALNVEYDVVNNSGNNATFGMYAHLRQNLMDAGGSITMPTYRGGAYSTEDVRYKKYSFEDMQDRNLSINLADGQGWAAMIQHYFAAAWIPRNEPGTNLYTRVIGNLGDIGVRMPNKTIATGDQAKFEATLWVGPKLQNEMAAVAENLDLVVDYGWLWFIAKPLHSLLAFIQSFVGNWGVAIICLTFIVRGAMYPLTKAQYTSMAKMRMLQPKLQAMRERIGDDRQRMSQEMMELYKKEKVNPLGGCLPLILQMPIFIALYWALMESVELRHSPFFGWIHDLSAQDPYYILPLLMGASMFLIQKMSPTTVTDPMQQKIMTFMPVMFTFFFLFFPSGLVLYWLVSNIVTLIQQTLIYKALEKKGLHTK.

The chain crosses the membrane as a helical span at residues N6 to A26. Residues Q36–A63 are disordered. The next 4 helical transmembrane spans lie at A342–V362, L417–L437, L455–I475, and P496–V516.

This sequence belongs to the OXA1/ALB3/YidC family. Type 1 subfamily. Interacts with the Sec translocase complex via SecD. Specifically interacts with transmembrane segments of nascent integral membrane proteins during membrane integration.

The protein resides in the cell inner membrane. Required for the insertion and/or proper folding and/or complex formation of integral membrane proteins into the membrane. Involved in integration of membrane proteins that insert both dependently and independently of the Sec translocase complex, as well as at least some lipoproteins. Aids folding of multispanning membrane proteins. In Vibrio campbellii (strain ATCC BAA-1116), this protein is Membrane protein insertase YidC.